Here is a 340-residue protein sequence, read N- to C-terminus: Entry-fusion complex protein OPG094 (340 aa).

Glycine 2 carries N-myristoyl glycine; by host lipidation. Residues glycine 2–aspartate 319 are Virion surface-facing. A helical; Signal-anchor for type II membrane protein transmembrane segment spans residues leucine 320 to isoleucine 340.

The protein belongs to the orthopoxvirus OPG086 family. As to quaternary structure, interacts with OPG143. Component of the entry fusion complex (EFC) composed of OPG053, OPG076, OPG086, OPG094, OPG095, OPG099, OPG107, OPG143, OPG104, OPG147 and OPG155. Except for OPG095 and OPG053, each of the EFC proteins is required for assembly or stability of the complex. Unglycosylated because produced in viral factories instead of the classic ER -Golgi route.

It is found in the virion membrane. Its function is as follows. Component of the entry fusion complex (EFC), which consists of 11 proteins. During cell infection, this complex mediates entry of the virion core into the host cytoplasm by a two-step mechanism consisting of lipid mixing of the viral and cellular membranes and subsequent pore formation. This chain is Entry-fusion complex protein OPG094 (OPG094), found in Homo sapiens (Human).